We begin with the raw amino-acid sequence, 190 residues long: 3-isopropylmalate dehydratase small subunit (190 aa).

The protein belongs to the LeuD family. LeuD type 1 subfamily. In terms of assembly, heterodimer of LeuC and LeuD.

It catalyses the reaction (2R,3S)-3-isopropylmalate = (2S)-2-isopropylmalate. It functions in the pathway amino-acid biosynthesis; L-leucine biosynthesis; L-leucine from 3-methyl-2-oxobutanoate: step 2/4. In terms of biological role, catalyzes the isomerization between 2-isopropylmalate and 3-isopropylmalate, via the formation of 2-isopropylmaleate. The chain is 3-isopropylmalate dehydratase small subunit from Staphylococcus aureus (strain USA300).